The primary structure comprises 301 residues: Homoserine O-acetyltransferase (301 aa).

The active-site Acyl-thioester intermediate is the Cys-142. Positions 163 and 192 each coordinate substrate. His-235 serves as the catalytic Proton acceptor. Glu-237 is a catalytic residue. A substrate-binding site is contributed by Arg-249.

This sequence belongs to the MetA family.

The protein localises to the cytoplasm. The enzyme catalyses L-homoserine + acetyl-CoA = O-acetyl-L-homoserine + CoA. It participates in amino-acid biosynthesis; L-methionine biosynthesis via de novo pathway; O-acetyl-L-homoserine from L-homoserine: step 1/1. Its function is as follows. Transfers an acetyl group from acetyl-CoA to L-homoserine, forming acetyl-L-homoserine. The sequence is that of Homoserine O-acetyltransferase from Bacillus cytotoxicus (strain DSM 22905 / CIP 110041 / 391-98 / NVH 391-98).